The sequence spans 552 residues: 2,3-bisphosphoglycerate-independent phosphoglycerate mutase (552 aa).

The segment covering 1 to 25 (MTNTQQQSESIDDNQAQLSKQQNSD) has biased composition (polar residues). The disordered stretch occupies residues 1–30 (MTNTQQQSESIDDNQAQLSKQQNSDNNKKV). The Mn(2+) site is built by aspartate 38 and serine 88. The active-site Phosphoserine intermediate is serine 88. Substrate-binding positions include histidine 149, 179–180 (RD), arginine 217, arginine 223, 293–296 (RADR), and lysine 373. Residues aspartate 440, histidine 444, aspartate 481, histidine 482, and histidine 500 each coordinate Mn(2+).

It belongs to the BPG-independent phosphoglycerate mutase family. Monomer. Mn(2+) is required as a cofactor.

It catalyses the reaction (2R)-2-phosphoglycerate = (2R)-3-phosphoglycerate. The protein operates within carbohydrate degradation; glycolysis; pyruvate from D-glyceraldehyde 3-phosphate: step 3/5. Functionally, catalyzes the interconversion of 2-phosphoglycerate and 3-phosphoglycerate. The polypeptide is 2,3-bisphosphoglycerate-independent phosphoglycerate mutase (Psychrobacter arcticus (strain DSM 17307 / VKM B-2377 / 273-4)).